The following is a 423-amino-acid chain: Glucose-1-phosphate adenylyltransferase (423 aa).

Alpha-D-glucose 1-phosphate contacts are provided by residues tyrosine 107, glycine 172, glutamate 187 to lysine 188, and serine 205.

This sequence belongs to the bacterial/plant glucose-1-phosphate adenylyltransferase family. As to quaternary structure, homotetramer.

The enzyme catalyses alpha-D-glucose 1-phosphate + ATP + H(+) = ADP-alpha-D-glucose + diphosphate. The protein operates within glycan biosynthesis; glycogen biosynthesis. In terms of biological role, involved in the biosynthesis of ADP-glucose, a building block required for the elongation reactions to produce glycogen. Catalyzes the reaction between ATP and alpha-D-glucose 1-phosphate (G1P) to produce pyrophosphate and ADP-Glc. This Cereibacter sphaeroides (strain ATCC 17029 / ATH 2.4.9) (Rhodobacter sphaeroides) protein is Glucose-1-phosphate adenylyltransferase.